A 67-amino-acid chain; its full sequence is Protein AaeX (67 aa).

The next 2 membrane-spanning stretches (helical) occupy residues 3 to 23 (LFPV…KLLL) and 43 to 63 (FVWH…YLIS).

Belongs to the AaeX family.

The protein localises to the cell membrane. The polypeptide is Protein AaeX (Salmonella gallinarum (strain 287/91 / NCTC 13346)).